A 404-amino-acid chain; its full sequence is Argininosuccinate synthase (404 aa).

Residues 11–19 (AYSGGLDTS) and Ala-38 each bind ATP. L-citrulline is bound by residues Tyr-91 and Ser-96. An ATP-binding site is contributed by Gly-121. Thr-123, Asn-127, and Asp-128 together coordinate L-aspartate. Position 127 (Asn-127) interacts with L-citrulline. Residues Arg-131, Ser-181, Ser-190, Glu-266, and Tyr-278 each coordinate L-citrulline.

Belongs to the argininosuccinate synthase family. Type 1 subfamily. Homotetramer.

It localises to the cytoplasm. The catalysed reaction is L-citrulline + L-aspartate + ATP = 2-(N(omega)-L-arginino)succinate + AMP + diphosphate + H(+). The protein operates within amino-acid biosynthesis; L-arginine biosynthesis; L-arginine from L-ornithine and carbamoyl phosphate: step 2/3. This chain is Argininosuccinate synthase, found in Sulfurimonas denitrificans (strain ATCC 33889 / DSM 1251) (Thiomicrospira denitrificans (strain ATCC 33889 / DSM 1251)).